Consider the following 470-residue polypeptide: Putative multidrug resistance protein MdtD (470 aa).

Over 1–11 (MTELPDNTRWQ) the chain is Periplasmic. Residues 12 to 32 (LWIVAFGFFMQSLDTTIVNTA) form a helical membrane-spanning segment. Residues 33 to 48 (LPSMAKSLGESPLHMH) are Cytoplasmic-facing. A helical membrane pass occupies residues 49–69 (MVVVSYVLTVAVMLPASGWLA). Topologically, residues 70 to 76 (DKIGVRN) are periplasmic. The helical transmembrane segment at 77-97 (IFFAAIVLFTLGSLFCALSGT) threads the bilayer. At 98 to 101 (LNQL) the chain is on the cytoplasmic side. Residues 102-124 (VLARVLQGVGGAMMVPVGRLTVM) form a helical membrane-spanning segment. Residues 125 to 137 (KIVPRAQYMAAMT) are Periplasmic-facing. A helical transmembrane segment spans residues 138–158 (FVTLPGQIGPLLGPALGGVLV). Residues 159-164 (EYASWH) are Cytoplasmic-facing. Residues 165–185 (WIFLINIPVGIVGAMATFMLM) traverse the membrane as a helical segment. Residues 186–196 (PNYIIETRRFD) lie on the Periplasmic side of the membrane. Residues 197-217 (LPGFLLLAIGMAVLTLALDGS) traverse the membrane as a helical segment. Over 218–224 (KSMGISP) the chain is Cytoplasmic. The helical transmembrane segment at 225–245 (WTLAGLAAGGAAAILLYLFHA) threads the bilayer. Residues 246–262 (KKNSGALFSLRLFRTPT) are Periplasmic-facing. Residues 263–283 (FSLGLLGSFAGRIGSGMLPFM) traverse the membrane as a helical segment. Over 284–285 (TP) the chain is Cytoplasmic. Residues 286 to 306 (VFLQIGLGFSPFHAGLMMIPM) traverse the membrane as a helical segment. The Periplasmic segment spans residues 307–341 (VLGSMGMKRIVVQIVNRFGYRRVLVATTLGLALVS). The helical transmembrane segment at 342–362 (LLFMSVALLGWYYLLPLVLLL) threads the bilayer. Over 363–395 (QGMVNSARFSSMNTLTLKDLPDTLASSGNSLLS) the chain is Cytoplasmic. A helical membrane pass occupies residues 396–416 (MIMQLSMSIGVTIAGMLLGMF). The Periplasmic segment spans residues 417–430 (GQQHIGIDSSATHH). A helical transmembrane segment spans residues 431–451 (VFMYTWLCMAVIIALPAIIFA). The Cytoplasmic segment spans residues 452–470 (RVPNDTQQNMVISRRKRSL).

Belongs to the major facilitator superfamily. TCR/Tet family.

The protein localises to the cell inner membrane. This chain is Putative multidrug resistance protein MdtD, found in Salmonella typhimurium (strain LT2 / SGSC1412 / ATCC 700720).